Here is a 163-residue protein sequence, read N- to C-terminus: Protein-export protein SecB (163 aa).

This sequence belongs to the SecB family. Homotetramer, a dimer of dimers. One homotetramer interacts with 1 SecA dimer.

It is found in the cytoplasm. In terms of biological role, one of the proteins required for the normal export of preproteins out of the cell cytoplasm. It is a molecular chaperone that binds to a subset of precursor proteins, maintaining them in a translocation-competent state. It also specifically binds to its receptor SecA. The chain is Protein-export protein SecB from Caulobacter vibrioides (strain ATCC 19089 / CIP 103742 / CB 15) (Caulobacter crescentus).